The sequence spans 712 residues: Glucans biosynthesis glucosyltransferase H (712 aa).

6 helical membrane passes run 57-77 (LAIM…MYQV), 89-109 (IVLA…VSAL), 408-428 (GIGS…GILI), 462-482 (FAGT…LVVI), 552-572 (YAAP…VSWP), and 573-593 (LLLW…VALL).

This sequence belongs to the glycosyltransferase 2 family. OpgH subfamily.

Its subcellular location is the cell inner membrane. It functions in the pathway glycan metabolism; osmoregulated periplasmic glucan (OPG) biosynthesis. Involved in the biosynthesis of osmoregulated periplasmic glucans (OPGs). The protein is Glucans biosynthesis glucosyltransferase H of Rhodopseudomonas palustris (strain BisA53).